Reading from the N-terminus, the 865-residue chain is Alanine--tRNA ligase (865 aa).

4 residues coordinate Zn(2+): His-554, His-558, Cys-656, and His-660.

Belongs to the class-II aminoacyl-tRNA synthetase family. It depends on Zn(2+) as a cofactor.

It is found in the cytoplasm. It catalyses the reaction tRNA(Ala) + L-alanine + ATP = L-alanyl-tRNA(Ala) + AMP + diphosphate. Catalyzes the attachment of alanine to tRNA(Ala) in a two-step reaction: alanine is first activated by ATP to form Ala-AMP and then transferred to the acceptor end of tRNA(Ala). Also edits incorrectly charged Ser-tRNA(Ala) and Gly-tRNA(Ala) via its editing domain. The chain is Alanine--tRNA ligase from Francisella tularensis subsp. tularensis (strain FSC 198).